The chain runs to 347 residues: MAAAIRHDWQHDELQALFDLPFPELLFRAAAVHREHFDPAQVQVSTLLSVKTGGCPEDCAYCPQAQRYSTGVNAQKLMETDAVLAKARQAKAAGASRFCMGAAWRSPKDRDIPKVAAMIAGVKALGLETCATLGMLSGEQARALKDAGLDYYNHNLDTAPDYYDSIIHTRQYQDRLDTLEHVRDAGLKTCCGGIVGMGETRAQRVGLLLALASLPAHPDSVPINKLVQVAGTPLHGSAELDPFEFVRMIAVARIAMPRSMVRLSAGREAMSDELQALCFLAGANSIFYGDKLLTTGNPESERDLALFARLGLQPMAVQVDAEGHDHGGTVHADISADTPGCGCAHAA.

The region spanning Ala-40–Arg-258 is the Radical SAM core domain. Positions 55, 59, and 62 each coordinate [4Fe-4S] cluster. The [2Fe-2S] cluster site is built by Cys-99, Cys-130, Cys-190, and Arg-262.

The protein belongs to the radical SAM superfamily. Biotin synthase family. Homodimer. The cofactor is [4Fe-4S] cluster. [2Fe-2S] cluster is required as a cofactor.

It catalyses the reaction (4R,5S)-dethiobiotin + (sulfur carrier)-SH + 2 reduced [2Fe-2S]-[ferredoxin] + 2 S-adenosyl-L-methionine = (sulfur carrier)-H + biotin + 2 5'-deoxyadenosine + 2 L-methionine + 2 oxidized [2Fe-2S]-[ferredoxin]. The protein operates within cofactor biosynthesis; biotin biosynthesis; biotin from 7,8-diaminononanoate: step 2/2. Catalyzes the conversion of dethiobiotin (DTB) to biotin by the insertion of a sulfur atom into dethiobiotin via a radical-based mechanism. The protein is Biotin synthase of Stenotrophomonas maltophilia (strain K279a).